The primary structure comprises 332 residues: Anthranilate phosphoribosyltransferase (332 aa).

Residues Gly-78, 81–82 (GD), Thr-86, 88–91 (NVST), 106–114 (KHGNRAASS), and Ala-118 contribute to the 5-phospho-alpha-D-ribose 1-diphosphate site. Gly-78 is a binding site for anthranilate. Residue Ser-90 participates in Mg(2+) binding. Asn-109 serves as a coordination point for anthranilate. Residue Arg-164 participates in anthranilate binding. Mg(2+) is bound by residues Asp-223 and Glu-224.

This sequence belongs to the anthranilate phosphoribosyltransferase family. In terms of assembly, homodimer. It depends on Mg(2+) as a cofactor.

It carries out the reaction N-(5-phospho-beta-D-ribosyl)anthranilate + diphosphate = 5-phospho-alpha-D-ribose 1-diphosphate + anthranilate. Its pathway is amino-acid biosynthesis; L-tryptophan biosynthesis; L-tryptophan from chorismate: step 2/5. Functionally, catalyzes the transfer of the phosphoribosyl group of 5-phosphorylribose-1-pyrophosphate (PRPP) to anthranilate to yield N-(5'-phosphoribosyl)-anthranilate (PRA). This is Anthranilate phosphoribosyltransferase from Sphingopyxis alaskensis (strain DSM 13593 / LMG 18877 / RB2256) (Sphingomonas alaskensis).